We begin with the raw amino-acid sequence, 288 residues long: UTP--glucose-1-phosphate uridylyltransferase (288 aa).

The protein belongs to the UDPGP type 2 family.

It catalyses the reaction alpha-D-glucose 1-phosphate + UTP + H(+) = UDP-alpha-D-glucose + diphosphate. Its pathway is glycolipid metabolism; diglucosyl-diacylglycerol biosynthesis. Its function is as follows. Catalyzes the formation of UDP-glucose from glucose-1-phosphate and UTP. This is an intermediate step in the biosynthesis of diglucosyl-diacylglycerol (Glc2-DAG), i.e. the predominant glycolipid found in the S.aureus membrane, which is also used as a membrane anchor for lipoteichoic acid (LTA). The chain is UTP--glucose-1-phosphate uridylyltransferase (gtaB) from Staphylococcus aureus (strain bovine RF122 / ET3-1).